The following is a 305-amino-acid chain: MKKFLKVWSVLTIICMTVVVFGGALVTKTGSADGCGNSWPLCNGQLVRLTDVTPEKLIEFMHRMTTGISSIFVIVLAICAWIYMKNRRETKPLAIIAVLFLIIQALMGMAAVVWGQNPYIMALHFGISIICYASIVLLALMIFEVDRKFDARNLVMGTKLRINIYALTIYTYLAVYTGALVRHEKASMAVPVWPFENGKFIMPDSVQDYVQYFHRVAAFILIVWLLYVTWLVFRDYRRYRVLTFSMVLSLLFIALQAVTGALSVYTGVNLYIALAHSLIITMLFALLCYLCLLASRSKSNRLRIK.

At 1–6 (MKKFLK) the chain is on the cytoplasmic side. A helical transmembrane segment spans residues 7–27 (VWSVLTIICMTVVVFGGALVT). Topologically, residues 28-63 (KTGSADGCGNSWPLCNGQLVRLTDVTPEKLIEFMHR) are extracellular. An intrachain disulfide couples Cys-35 to Cys-42. Residue Glu-59 is part of the active site. Heme o is bound at residue His-62. The helical transmembrane segment at 64 to 84 (MTTGISSIFVIVLAICAWIYM) threads the bilayer. Topologically, residues 85–92 (KNRRETKP) are cytoplasmic. The helical transmembrane segment at 93-113 (LAIIAVLFLIIQALMGMAAVV) threads the bilayer. At 114–122 (WGQNPYIMA) the chain is on the extracellular side. Residues 123 to 143 (LHFGISIICYASIVLLALMIF) traverse the membrane as a helical segment. His-124 is a binding site for heme o. Residues 144 to 160 (EVDRKFDARNLVMGTKL) lie on the Cytoplasmic side of the membrane. The helical transmembrane segment at 161–181 (RINIYALTIYTYLAVYTGALV) threads the bilayer. At 182 to 212 (RHEKASMAVPVWPFENGKFIMPDSVQDYVQY) the chain is on the extracellular side. The chain crosses the membrane as a helical span at residues 213–233 (FHRVAAFILIVWLLYVTWLVF). Residue His-214 participates in heme b binding. Topologically, residues 234–240 (RDYRRYR) are cytoplasmic. Residues 241-261 (VLTFSMVLSLLFIALQAVTGA) form a helical membrane-spanning segment. The Extracellular segment spans residues 262 to 271 (LSVYTGVNLY). The chain crosses the membrane as a helical span at residues 272-292 (IALAHSLIITMLFALLCYLCL). His-276 provides a ligand contact to heme b. At 293 to 305 (LASRSKSNRLRIK) the chain is on the cytoplasmic side.

Belongs to the COX15/CtaA family. Type 1 subfamily. In terms of assembly, interacts with CtaB. The cofactor is heme b.

It is found in the cell membrane. The catalysed reaction is Fe(II)-heme o + 2 A + H2O = Fe(II)-heme a + 2 AH2. It functions in the pathway porphyrin-containing compound metabolism; heme A biosynthesis; heme A from heme O: step 1/1. Its function is as follows. Catalyzes the conversion of heme O to heme A by two successive hydroxylations of the methyl group at C8. The first hydroxylation forms heme I, the second hydroxylation results in an unstable dihydroxymethyl group, which spontaneously dehydrates, resulting in the formyl group of heme A. The polypeptide is Heme A synthase (Listeria welshimeri serovar 6b (strain ATCC 35897 / DSM 20650 / CCUG 15529 / CIP 8149 / NCTC 11857 / SLCC 5334 / V8)).